Here is a 369-residue protein sequence, read N- to C-terminus: Chaperone protein DnaJ (369 aa).

The J domain maps to 3 to 67; sequence DHYEVLGVER…QQRQQYDRGG (65 aa). A CR-type zinc finger spans residues 123 to 205; that stretch reads GAHRDLEVDT…CQGQGRVRAR (83 aa). The Zn(2+) site is built by C136, C139, C153, C156, C179, C182, C193, and C196. CXXCXGXG motif repeat units follow at residues 136-143, 153-160, 179-186, and 193-200; these read CETCDGSC, CDICHGTG, CGSCRGYG, and CVTCQGQG.

This sequence belongs to the DnaJ family. Homodimer. It depends on Zn(2+) as a cofactor.

It localises to the cytoplasm. Its function is as follows. Participates actively in the response to hyperosmotic and heat shock by preventing the aggregation of stress-denatured proteins and by disaggregating proteins, also in an autonomous, DnaK-independent fashion. Unfolded proteins bind initially to DnaJ; upon interaction with the DnaJ-bound protein, DnaK hydrolyzes its bound ATP, resulting in the formation of a stable complex. GrpE releases ADP from DnaK; ATP binding to DnaK triggers the release of the substrate protein, thus completing the reaction cycle. Several rounds of ATP-dependent interactions between DnaJ, DnaK and GrpE are required for fully efficient folding. Also involved, together with DnaK and GrpE, in the DNA replication of plasmids through activation of initiation proteins. This is Chaperone protein DnaJ from Leifsonia xyli subsp. xyli (strain CTCB07).